We begin with the raw amino-acid sequence, 262 residues long: Lens fiber major intrinsic protein (262 aa).

Over 1–9 the chain is Cytoplasmic; the sequence is MRELRSSSF. The chain crosses the membrane as a helical span at residues 10 to 29; the sequence is WRAILAEFLGSLLYTLLGLG. Residues 30 to 41 lie on the Extracellular side of the membrane; it reads ASLRWAPGPHGV. A helical membrane pass occupies residues 42–59; sequence LGSALAFGLAQATLVQAL. Residues 60–61 are Cytoplasmic-facing; it reads GH. An intramembrane region (discontinuously helical) is located at residues 62–77; that stretch reads VSGGHINPAITLAFLL. The short motif at 68 to 70 is the NPA 1 element; that stretch reads NPA. The Cytoplasmic segment spans residues 78–82; that stretch reads ASQLS. The chain crosses the membrane as a helical span at residues 83–106; the sequence is LPRALGYLLAQLLGALAGAGVLYG. The Extracellular portion of the chain corresponds to 107–127; that stretch reads VTPAAVRGTLGLSALHPSVGP. A helical transmembrane segment spans residues 128–148; the sequence is GQGTVVELLLTAQFILCVFAS. The Cytoplasmic segment spans residues 149 to 156; the sequence is FDDRHDGR. Residues 157–175 form a helical membrane-spanning segment; that stretch reads PGSAALPVGFSLALGHLFG. Over 176 to 178 the chain is Extracellular; that stretch reads IPF. The discontinuously helical intramembrane region spans 179–193; the sequence is TGAGMNPARSFAPAV. Residues 184 to 186 carry the NPA 2 motif; that stretch reads NPA. The Extracellular segment spans residues 194-200; the sequence is ITRNFTN. Residues 201–222 form a helical membrane-spanning segment; the sequence is HWVFWAGPLLGAALAALLYELA. Topologically, residues 223–262 are cytoplasmic; the sequence is LCPRARSMAERLAVLRGEPPAAAPPPEPPAEPLELKTQGL. Positions 227–237 are interaction with CALM; that stretch reads ARSMAERLAVL. Positions 240–262 are disordered; the sequence is EPPAAAPPPEPPAEPLELKTQGL. The span at 243–253 shows a compositional bias: pro residues; it reads AAAPPPEPPAE.

The protein belongs to the MIP/aquaporin (TC 1.A.8) family. In terms of assembly, homotetramer; each monomer provides an independent water pore. Two homotetramers on opposing membranes can dimerize, forming a cell-cell junction. Interacts with CALM; the calcium-calmodulin/CALM complex interacts with the cytoplasmic domains of two aquaporins, leading to channel closure. During early stages of lens development, interacts through its C-terminal region with Cx56 and GJA8/Cx45.6. Major component of lens fiber gap junctions.

It localises to the cell membrane. It is found in the cell junction. The enzyme catalyses H2O(in) = H2O(out). Its activity is regulated as follows. The water channel activity is inhibited by calcium through calmodulin/CALM. Aquaporins form homotetrameric transmembrane channels, with each monomer independently mediating water transport across the plasma membrane along its osmotic gradient. Specifically expressed in lens fiber cells, this aquaporin is crucial for maintaining lens water homeostasis and transparency. Beyond water permeability, it also acts as a cell-to-cell adhesion molecule, forming thin junctions between lens fiber cells that are essential for maintaining the ordered structure and transparency of the lens. This chain is Lens fiber major intrinsic protein, found in Gallus gallus (Chicken).